The sequence spans 288 residues: Small ribosomal subunit protein uS2 (288 aa).

The span at 259–276 shows a compositional bias: low complexity; sequence EAAPAAEEAPAAEAEAAA. Residues 259–288 form a disordered region; it reads EAAPAAEEAPAAEAEAAATDTSSESDKTEA.

This sequence belongs to the universal ribosomal protein uS2 family.

The protein is Small ribosomal subunit protein uS2 of Maricaulis maris (strain MCS10) (Caulobacter maris).